We begin with the raw amino-acid sequence, 122 residues long: Basic phospholipase A2 homolog ecarpholin S (122 aa).

Disulfide bonds link Cys-26-Cys-115, Cys-28-Cys-44, Cys-43-Cys-95, Cys-49-Cys-122, Cys-50-Cys-88, Cys-57-Cys-81, and Cys-75-Cys-86. The segment at 105 to 117 (KKYTYYPNFWCKG) is important for membrane-damaging activities in eukaryotes and bacteria; heparin-binding.

Expressed by the venom gland.

Its subcellular location is the secreted. With respect to regulation, suramin inhibits the myotoxic activity. In terms of biological role, snake venom phospholipase A2 homolog that lacks enzymatic activity. Shows high myotoxin activities and displays edema-inducing activities. This chain is Basic phospholipase A2 homolog ecarpholin S, found in Echis carinatus (Saw-scaled viper).